The primary structure comprises 210 residues: uncharacterized protein (210 aa).

This is an uncharacterized protein from Acanthamoeba polyphaga (Amoeba).